We begin with the raw amino-acid sequence, 299 residues long: Ribosomal RNA small subunit methyltransferase H (299 aa).

S-adenosyl-L-methionine is bound by residues 36 to 38, aspartate 55, phenylalanine 82, aspartate 97, and glutamine 104; that span reads GGH.

The protein belongs to the methyltransferase superfamily. RsmH family.

It is found in the cytoplasm. It catalyses the reaction cytidine(1402) in 16S rRNA + S-adenosyl-L-methionine = N(4)-methylcytidine(1402) in 16S rRNA + S-adenosyl-L-homocysteine + H(+). Its function is as follows. Specifically methylates the N4 position of cytidine in position 1402 (C1402) of 16S rRNA. The sequence is that of Ribosomal RNA small subunit methyltransferase H from Synechococcus sp. (strain RCC307).